The primary structure comprises 349 residues: Fructose-1,6-bisphosphatase class 1 (349 aa).

Mg(2+)-binding residues include Glu113, Asp135, Ile137, and Asp138. Residues Asp138–Ser141, Asn230, Tyr258, and Lys288 contribute to the substrate site. Glu294 contacts Mg(2+).

The protein belongs to the FBPase class 1 family. Homotetramer. Mg(2+) is required as a cofactor.

The protein resides in the cytoplasm. The enzyme catalyses beta-D-fructose 1,6-bisphosphate + H2O = beta-D-fructose 6-phosphate + phosphate. It functions in the pathway carbohydrate biosynthesis; Calvin cycle. In Trichormus variabilis (strain ATCC 29413 / PCC 7937) (Anabaena variabilis), this protein is Fructose-1,6-bisphosphatase class 1.